Reading from the N-terminus, the 461-residue chain is Argininosuccinate lyase (461 aa).

Belongs to the lyase 1 family. Argininosuccinate lyase subfamily.

It localises to the cytoplasm. It carries out the reaction 2-(N(omega)-L-arginino)succinate = fumarate + L-arginine. Its pathway is amino-acid biosynthesis; L-arginine biosynthesis; L-arginine from L-ornithine and carbamoyl phosphate: step 3/3. The protein is Argininosuccinate lyase of Shewanella piezotolerans (strain WP3 / JCM 13877).